Consider the following 246-residue polypeptide: UPF0736 protein GK0808 (246 aa).

The protein belongs to the UPF0736 family.

In Geobacillus kaustophilus (strain HTA426), this protein is UPF0736 protein GK0808.